A 339-amino-acid chain; its full sequence is Dihydroorotate dehydrogenase (quinone) (339 aa).

FMN is bound by residues 64–68 (AGADK) and threonine 88. Lysine 68 contacts substrate. 113 to 117 (NRNGF) serves as a coordination point for substrate. FMN-binding residues include asparagine 141 and asparagine 174. Asparagine 174 lines the substrate pocket. The active-site Nucleophile is the serine 177. Asparagine 179 is a binding site for substrate. Residues lysine 219 and threonine 247 each coordinate FMN. Position 248–249 (248–249 (NT)) interacts with substrate. FMN contacts are provided by residues glycine 270, glycine 299, and 320–321 (YS).

The protein belongs to the dihydroorotate dehydrogenase family. Type 2 subfamily. In terms of assembly, monomer. It depends on FMN as a cofactor.

The protein resides in the cell membrane. The enzyme catalyses (S)-dihydroorotate + a quinone = orotate + a quinol. The protein operates within pyrimidine metabolism; UMP biosynthesis via de novo pathway; orotate from (S)-dihydroorotate (quinone route): step 1/1. Functionally, catalyzes the conversion of dihydroorotate to orotate with quinone as electron acceptor. This is Dihydroorotate dehydrogenase (quinone) from Haemophilus influenzae (strain PittGG).